A 474-amino-acid chain; its full sequence is Ribulose bisphosphate carboxylase large chain (474 aa).

Pro2 is subject to N-acetylproline. Lys13 is modified (N6,N6,N6-trimethyllysine). The substrate site is built by Asn122 and Thr172. The active-site Proton acceptor is the Lys174. Lys176 contributes to the substrate binding site. The Mg(2+) site is built by Lys200, Asp202, and Glu203. Position 200 is an N6-carboxylysine (Lys200). Residue His293 is the Proton acceptor of the active site. Positions 294, 326, and 378 each coordinate substrate.

Belongs to the RuBisCO large chain family. Type I subfamily. Heterohexadecamer of 8 large chains and 8 small chains; disulfide-linked. The disulfide link is formed within the large subunit homodimers. The cofactor is Mg(2+). In terms of processing, the disulfide bond which can form in the large chain dimeric partners within the hexadecamer appears to be associated with oxidative stress and protein turnover.

The protein localises to the plastid. The protein resides in the chloroplast. The catalysed reaction is 2 (2R)-3-phosphoglycerate + 2 H(+) = D-ribulose 1,5-bisphosphate + CO2 + H2O. The enzyme catalyses D-ribulose 1,5-bisphosphate + O2 = 2-phosphoglycolate + (2R)-3-phosphoglycerate + 2 H(+). Functionally, ruBisCO catalyzes two reactions: the carboxylation of D-ribulose 1,5-bisphosphate, the primary event in carbon dioxide fixation, as well as the oxidative fragmentation of the pentose substrate in the photorespiration process. Both reactions occur simultaneously and in competition at the same active site. In Oltmannsiellopsis viridis (Marine flagellate), this protein is Ribulose bisphosphate carboxylase large chain.